The primary structure comprises 317 residues: Melanocyte-stimulating hormone receptor (317 aa).

The Extracellular segment spans residues 1–37 (MPMQGAQRKLLGSLNSTPTATSNLGLAANHTGAPCLE). A glycan (N-linked (GlcNAc...) asparagine) is linked at Asn29. Residues 38 to 63 (VSIPDGLFLSLGLVSLVENVLVVAAV) traverse the membrane as a helical segment. Over 64–72 (AKNRNLHSS) the chain is Cytoplasmic. The chain crosses the membrane as a helical span at residues 73–93 (MYCFICCLALSDLLVSGSNML). Over 94–118 (ETAVILLLETGALATRTSVVQQLHN) the chain is Extracellular. Residues 119 to 140 (TINVLTCSSMLCSLCFLGAIAV) traverse the membrane as a helical segment. Over 141–163 (DRYISIFYALRYHSIMTLPRAQR) the chain is Cytoplasmic. Residues 164–183 (AIAAIWVASVLSSTLFITYY) form a helical membrane-spanning segment. Residues 184–191 (DHAAVLLC) lie on the Extracellular side of the membrane. A helical membrane pass occupies residues 192–211 (LVVFFLAMLVLMAVLYVHML). The Cytoplasmic portion of the chain corresponds to 212-240 (ARACQHAHGIIRLHKRQTPAHQGFGLRGA). A helical transmembrane segment spans residues 241–266 (ATLTILLGIFFLCWGPFFLHLTLVVF). Over 267–279 (CPQHLTCSCIFKN) the chain is Extracellular. The helical transmembrane segment at 280-300 (FKVFLTLIICNTIIDPLIYAF) threads the bilayer. The Cytoplasmic portion of the chain corresponds to 301-317 (RSQELRRTLKEVLLCSW). Cys315 carries the S-palmitoyl cysteine lipid modification.

The protein belongs to the G-protein coupled receptor 1 family. As to quaternary structure, interacts with MGRN1, but does not undergo MGRN1-mediated ubiquitination; this interaction competes with GNAS-binding and thus inhibits agonist-induced cAMP production. Interacts with OPN3; the interaction results in a decrease in MC1R-mediated cAMP signaling and ultimately a decrease in melanin production in melanocytes.

It is found in the cell membrane. Functionally, receptor for MSH (alpha, beta and gamma) and ACTH. The activity of this receptor is mediated by G proteins which activate adenylate cyclase. Mediates melanogenesis, the production of eumelanin (black/brown) and phaeomelanin (red/yellow), via regulation of cAMP signaling in melanocytes. This chain is Melanocyte-stimulating hormone receptor (MC1R), found in Saguinus oedipus (Cotton-top tamarin).